The sequence spans 561 residues: Long-chain-fatty-acid--CoA ligase (561 aa).

213–224 (YTGGTTGVAKGA) contacts ATP.

The protein belongs to the ATP-dependent AMP-binding enzyme family. The cofactor is Mg(2+).

Its subcellular location is the membrane. The catalysed reaction is a long-chain fatty acid + ATP + CoA = a long-chain fatty acyl-CoA + AMP + diphosphate. The protein operates within lipid metabolism; fatty acid beta-oxidation. In terms of biological role, catalyzes the esterification, concomitant with transport, of exogenous long-chain fatty acids into metabolically active CoA thioesters for subsequent degradation or incorporation into phospholipids. This chain is Long-chain-fatty-acid--CoA ligase (fadD), found in Escherichia coli O157:H7.